The chain runs to 624 residues: Ubiquitin-associated and SH3 domain-containing protein A (624 aa).

Residues 19–60 enclose the UBA domain; the sequence is RSTPSLLDPLLAMGFPTHTALKALAATGRKTAEAAADWLHGH. One can recognise an SH3 domain in the interval 238 to 303; it reads VHYQTLKALF…PENYTERANE (66 aa). The tract at residues 358-624 is phosphatase-like; that stretch reads RRGILVVRHG…FNWRNWISSN (267 aa).

In terms of assembly, homodimer or homooligomer. Interacts with CBL. Part of a complex containing CBL and activated EGFR. Interacts with ubiquitin and with mono-ubiquitinated proteins. Interacts with dynamin.

The protein localises to the cytoplasm. It is found in the nucleus. In terms of biological role, interferes with CBL-mediated down-regulation and degradation of receptor-type tyrosine kinases. Promotes accumulation of activated target receptors, such as T-cell receptors, EGFR and PDGFRB, on the cell surface. May inhibit dynamin-dependent endocytic pathways by functionally sequestering dynamin via its SH3 domain. Exhibits negligible protein tyrosine phosphatase activity at neutral pH. May act as a dominant-negative regulator of UBASH3B-dependent dephosphorylation. The polypeptide is Ubiquitin-associated and SH3 domain-containing protein A (Ubash3a) (Mus musculus (Mouse)).